Consider the following 535-residue polypeptide: MELDLSPTHLSSSPEDVCPTPATPPETPPPPDNPPPGDVKRSQPLPIPSSRKLREEEFQATSLPSIPNPFPELCSPPSQKPILGGSSGARGLLPRDSSRLCVVKVYSEDGACRSVEVAAGATARHVCEMLVQRAHALSDESWGLVESHPYLALERGLEDHEFVVEVQEAWPVGGDSRFIFRKNFAKYELFKSPPHTLFPEKMVSSCLDAQTGISHEDLIQNFLNAGSFPEIQGFLQLRGSGRGSGRKLWKRFFCFLRRSGLYYSTKGTSKDPRHLQYVADVNESNVYVVTQGRKLYGMPTDFGFCVKPNKLRNGHKGLHIFCSEDEQSRTCWLAAFRLFKYGVQLYKNYQQAQSRHLRLSYLGSPPLRSVSDNTLVAMDFSGHAGRVIDNPREALSAAMEEAQAWRKKTNHRLSLPTTCSGSSLSAAIHRTQPWFHGRISREESQRLIGQQGLVDGVFLVRESQRNPQGFVLSLCHLQKVKHYLILPSEDEGCLYFSMDEGQTRFTDLLQLVEFHQLNRGILPCLLRHCCARVAL.

The interval 1 to 90 (MELDLSPTHL…PILGGSSGAR (90 aa)) is disordered. Pro residues predominate over residues 21-37 (PATPPETPPPPDNPPPG). One can recognise a Ras-associating domain in the interval 99–185 (RLCVVKVYSE…SRFIFRKNFA (87 aa)). Residues Tyr-187 and Tyr-341 each carry the phosphotyrosine; by FAK1 modification. Residues 228 to 341 (FPEIQGFLQL…WLAAFRLFKY (114 aa)) enclose the PH domain. Ser-364 is modified (phosphoserine). Residues 434 to 530 (WFHGRISREE…ILPCLLRHCC (97 aa)) form the SH2 domain.

This sequence belongs to the GRB7/10/14 family. As to quaternary structure, homodimer. Interacts (via SH2 domain) with EGFR, ERBB2, ERBB3 (when phosphorylated), ERBB4 (when phosphorylated), EPHB1, INSR, FGFR1, PDGFRA (tyrosine phosphorylated) and PDGFRB (tyrosine phosphorylated). Interacts with SHC1. Interacts with RND1. Interacts (when tyrosine phosphorylated) with FHL2 and HAX1. Interacts (via SH2 domain) with RET and PTK2/FAK1. Interacts (when not phosphorylated) with ELAVL1. In stressed cells, but not in normal cells, part of a complex that contains at least GRB7, PTK2/FAK1, STAU1, ELAVL1 and TIA1. Interacts (via SH2 domain) with KIT (phosphorylated). Interacts (via SH2 domain) with TEK/TIE2 (tyrosine phosphorylated). In terms of processing, phosphorylated on serine and threonine residues in response to activation of receptor kinases. Phosphorylated on tyrosine residues by TEK/TIE2. Phosphorylated on tyrosine residues by PTK2/FAK1, and possibly also other kinases. Phosphorylation is enhanced by activation of receptor kinases. Tyrosine phosphorylation is essential for activation of down-stream protein kinases. Phosphorylated on tyrosine residues in response to NTN1 signaling. Phosphorylation promotes stress granule disassembly during recovery after cellular stress.

It localises to the cytoplasm. The protein resides in the cell projection. It is found in the cell junction. The protein localises to the focal adhesion. Its subcellular location is the cell membrane. It localises to the cytoplasmic granule. In terms of biological role, adapter protein that interacts with the cytoplasmic domain of numerous receptor kinases and modulates down-stream signaling. Promotes activation of down-stream protein kinases, including STAT3, AKT1, MAPK1 and/or MAPK3. Promotes activation of HRAS. Plays a role in signal transduction in response to EGF. Plays a role in the regulation of cell proliferation and cell migration. Plays a role in the assembly and stability of RNA stress granules. Binds to the 5'UTR of target mRNA molecules and represses translation of target mRNA species, when not phosphorylated. Phosphorylation impairs RNA binding and promotes stress granule disassembly during recovery after cellular stress. The sequence is that of Growth factor receptor-bound protein 7 (Grb7) from Mus musculus (Mouse).